A 497-amino-acid chain; its full sequence is Phenylalanine--tRNA ligase alpha subunit (497 aa).

Residues Thr329, 372–374, and Tyr412 each bind L-phenylalanine; that span reads QIE. Glu414 is a Mg(2+) binding site. Phe438 contributes to the L-phenylalanine binding site.

The protein belongs to the class-II aminoacyl-tRNA synthetase family. Phe-tRNA synthetase alpha subunit type 2 subfamily. As to quaternary structure, heterotetramer; dimer of two heterodimers formed by alpha and beta subunits. Mg(2+) serves as cofactor.

It is found in the cytoplasm. The catalysed reaction is tRNA(Phe) + L-phenylalanine + ATP = L-phenylalanyl-tRNA(Phe) + AMP + diphosphate + H(+). The polypeptide is Phenylalanine--tRNA ligase alpha subunit (farsa) (Danio rerio (Zebrafish)).